Consider the following 247-residue polypeptide: Zinc finger protein YPR015C (247 aa).

2 C2H2-type zinc fingers span residues 185–207 and 213–237; these read KQCPICGKVCSRPSTLRTHYLIH and FKCTWEHCNKSFNVKSNMLRHLRTH.

In Saccharomyces cerevisiae (strain ATCC 204508 / S288c) (Baker's yeast), this protein is Zinc finger protein YPR015C.